Consider the following 238-residue polypeptide: Ribonuclease PH (238 aa).

Phosphate is bound by residues arginine 86 and 124–126 (GTR).

Belongs to the RNase PH family. Homohexameric ring arranged as a trimer of dimers.

The catalysed reaction is tRNA(n+1) + phosphate = tRNA(n) + a ribonucleoside 5'-diphosphate. In terms of biological role, phosphorolytic 3'-5' exoribonuclease that plays an important role in tRNA 3'-end maturation. Removes nucleotide residues following the 3'-CCA terminus of tRNAs; can also add nucleotides to the ends of RNA molecules by using nucleoside diphosphates as substrates, but this may not be physiologically important. Probably plays a role in initiation of 16S rRNA degradation (leading to ribosome degradation) during starvation. The sequence is that of Ribonuclease PH from Geotalea daltonii (strain DSM 22248 / JCM 15807 / FRC-32) (Geobacter daltonii).